The following is a 192-amino-acid chain: Large ribosomal subunit protein uL6 (192 aa).

Belongs to the universal ribosomal protein uL6 family. Component of the large ribosomal subunit.

The protein resides in the cytoplasm. Its function is as follows. Component of the large ribosomal subunit. The ribosome is a large ribonucleoprotein complex responsible for the synthesis of proteins in the cell. In Ictalurus punctatus (Channel catfish), this protein is Large ribosomal subunit protein uL6 (rpl9).